A 546-amino-acid chain; its full sequence is Thermolysin (546 aa).

The first 25 residues, 1–25, serve as a signal peptide directing secretion; that stretch reads MDKRAMLGAIGLAFGLMAWPFGASA. The propeptide at 26-228 is activation peptide; sequence KEKSMVWNEQ…EAKPGGGQPV (203 aa). The Ca(2+) site is built by Asp287, Asp289, Gln291, and Asp368. Zn(2+) is bound at residue His372. Residue Glu373 is part of the active site. Zn(2+)-binding residues include His376 and Glu396. The Ca(2+) site is built by Asn413, Asp415, Glu417, Glu420, Tyr423, Thr424, Ile427, and Asp430. His461 acts as the Proton donor in catalysis.

Belongs to the peptidase M4 family. It depends on Ca(2+) as a cofactor. The cofactor is Zn(2+).

The protein resides in the secreted. It catalyses the reaction Preferential cleavage: Xaa-|-Leu &gt; Xaa-|-Phe.. Extracellular zinc metalloprotease. Has collagenase activity. The chain is Thermolysin (npr) from Bacillus sp. (strain EA1).